The chain runs to 448 residues: Adenylosuccinate synthetase 1 (448 aa).

GTP-binding positions include 22–28 (GDEGKGK) and 50–52 (GHT). Residue aspartate 23 is the Proton acceptor of the active site. Mg(2+)-binding residues include aspartate 23 and glycine 50. IMP is bound by residues 23–26 (DEGK), 48–51 (NAGH), threonine 139, arginine 153, glutamine 234, threonine 249, and arginine 321. Histidine 51 acts as the Proton donor in catalysis. Residue 317–323 (SVTGRPR) coordinates substrate. Residues arginine 323, 349–351 (KLD), and 431–433 (STG) contribute to the GTP site.

Belongs to the adenylosuccinate synthetase family. In terms of assembly, homodimer. Requires Mg(2+) as cofactor.

Its subcellular location is the cytoplasm. It carries out the reaction IMP + L-aspartate + GTP = N(6)-(1,2-dicarboxyethyl)-AMP + GDP + phosphate + 2 H(+). The protein operates within purine metabolism; AMP biosynthesis via de novo pathway; AMP from IMP: step 1/2. Plays an important role in the de novo pathway of purine nucleotide biosynthesis. Catalyzes the first committed step in the biosynthesis of AMP from IMP. This is Adenylosuccinate synthetase 1 from Burkholderia lata (strain ATCC 17760 / DSM 23089 / LMG 22485 / NCIMB 9086 / R18194 / 383).